Consider the following 489-residue polypeptide: Cobyric acid synthase (489 aa).

Residues 251–439 (RLTVVAPVYP…LHGLFDTPAA (189 aa)) form the GATase cobBQ-type domain. The active-site Nucleophile is Cys332. Residue His431 is part of the active site.

The protein belongs to the CobB/CobQ family. CobQ subfamily.

Its pathway is cofactor biosynthesis; adenosylcobalamin biosynthesis. In terms of biological role, catalyzes amidations at positions B, D, E, and G on adenosylcobyrinic A,C-diamide. NH(2) groups are provided by glutamine, and one molecule of ATP is hydrogenolyzed for each amidation. The protein is Cobyric acid synthase of Aromatoleum aromaticum (strain DSM 19018 / LMG 30748 / EbN1) (Azoarcus sp. (strain EbN1)).